We begin with the raw amino-acid sequence, 105 residues long: Met repressor (105 aa).

This sequence belongs to the MetJ family. Homodimer.

It is found in the cytoplasm. Its function is as follows. This regulatory protein, when combined with SAM (S-adenosylmethionine) represses the expression of the methionine regulon and of enzymes involved in SAM synthesis. The sequence is that of Met repressor from Serratia proteamaculans (strain 568).